A 400-amino-acid chain; its full sequence is Na(+)/H(+) antiporter NhaA (400 aa).

12 consecutive transmembrane segments (helical) span residues 26 to 46 (AGGILLLFSAVVAMLLANSPL), 71 to 91 (LIHWINDGFMAVFFVLVGMEV), 107 to 127 (IFPAIAAIGGMVIPAVVYWFI), 137 to 157 (GWAIPMATDIAFALGIMALLS), 166 to 186 (IFLLALAIIDDLGAIVVIALF), 189 to 209 (HGLSVQALIFSAVAIIALILL), 212 to 232 (FKVSALCAYMVVGAILWASVL), 233 to 253 (KSGVHATLAGVIIGFSIPLKG), 273 to 293 (FVILPLFAFANAGVSFAGIDV), 299 to 319 (PLLLAIASGLIIGKPVGIFGF), 340 to 360 (IFAVAVLCGIGFTMSMFLASL), and 373 to 393 (LSRLGILLGSTVSAILGYLFL).

This sequence belongs to the NhaA Na(+)/H(+) (TC 2.A.33) antiporter family.

The protein resides in the cell inner membrane. It carries out the reaction Na(+)(in) + 2 H(+)(out) = Na(+)(out) + 2 H(+)(in). Functionally, na(+)/H(+) antiporter that extrudes sodium in exchange for external protons. This is Na(+)/H(+) antiporter NhaA from Haemophilus influenzae (strain PittGG).